The chain runs to 402 residues: mRNA-capping enzyme subunit alpha (402 aa).

The N6-GMP-lysine intermediate role is filled by Lys-67. The interval 374 to 402 is disordered; that stretch reads SVTKRKLDETSNDDAPAIKKVAKESEKEI.

It belongs to the eukaryotic GTase family. As to quaternary structure, heterodimer. The mRNA-capping enzyme is composed of two separate chains alpha and beta, respectively a mRNA guanylyltransferase and an mRNA 5'-triphosphate monophosphatase.

It is found in the nucleus. The catalysed reaction is a 5'-end diphospho-ribonucleoside in mRNA + GTP + H(+) = a 5'-end (5'-triphosphoguanosine)-ribonucleoside in mRNA + diphosphate. Second step of mRNA capping. Transfer of the GMP moiety of GTP to the 5'-end of RNA via an enzyme-GMP covalent reaction intermediate. This chain is mRNA-capping enzyme subunit alpha (ceg1), found in Schizosaccharomyces pombe (strain 972 / ATCC 24843) (Fission yeast).